A 234-amino-acid chain; its full sequence is Ribosomal RNA small subunit methyltransferase G (234 aa).

Residues Gly-85, Phe-90, and Arg-155 each coordinate S-adenosyl-L-methionine.

This sequence belongs to the methyltransferase superfamily. RNA methyltransferase RsmG family.

It is found in the cytoplasm. The enzyme catalyses guanosine(527) in 16S rRNA + S-adenosyl-L-methionine = N(7)-methylguanosine(527) in 16S rRNA + S-adenosyl-L-homocysteine. Functionally, specifically methylates the N7 position of guanine in position 527 of 16S rRNA. This is Ribosomal RNA small subunit methyltransferase G from Rhodopseudomonas palustris (strain BisB18).